A 348-amino-acid chain; its full sequence is Galactose-1-phosphate uridylyltransferase (348 aa).

28–31 (RAKR) lines the UDP-alpha-D-glucose pocket. Residues Cys52 and Cys55 each contribute to the Zn(2+) site. UDP-alpha-D-glucose is bound by residues Val61 and 77 to 78 (ND). His115 is a Zn(2+) binding site. UDP-alpha-D-glucose contacts are provided by residues Asn153 and 159–161 (GCS). Residue His164 participates in Zn(2+) binding. The active-site Tele-UMP-histidine intermediate is the His166. Gln168 is a binding site for UDP-alpha-D-glucose. Positions 182, 281, 296, and 298 each coordinate Fe cation. Residues 311-312 (KF), 316-317 (YE), and Gln323 contribute to the UDP-alpha-D-glucose site.

The protein belongs to the galactose-1-phosphate uridylyltransferase type 1 family. Homodimer. The cofactor is Zn(2+).

It carries out the reaction alpha-D-galactose 1-phosphate + UDP-alpha-D-glucose = alpha-D-glucose 1-phosphate + UDP-alpha-D-galactose. It participates in carbohydrate metabolism; galactose metabolism. This is Galactose-1-phosphate uridylyltransferase (galT) from Escherichia coli (strain K12).